The following is a 450-amino-acid chain: Phosphoglucosamine mutase (450 aa).

Residue serine 101 is the Phosphoserine intermediate of the active site. Mg(2+) contacts are provided by serine 101, aspartate 240, aspartate 242, and aspartate 244. Position 101 is a phosphoserine (serine 101).

This sequence belongs to the phosphohexose mutase family. Requires Mg(2+) as cofactor. In terms of processing, activated by phosphorylation.

The catalysed reaction is alpha-D-glucosamine 1-phosphate = D-glucosamine 6-phosphate. Its function is as follows. Catalyzes the conversion of glucosamine-6-phosphate to glucosamine-1-phosphate. This is Phosphoglucosamine mutase from Streptococcus thermophilus (strain ATCC BAA-250 / LMG 18311).